The chain runs to 334 residues: Protein-methionine-sulfoxide reductase catalytic subunit MsrP (334 aa).

Residues 1-44 (MKKNQFLKESDVTAESVFFMKRRQVLKALGISAAALSLPHAAHA) constitute a signal peptide (tat-type signal). Residues N88, 91 to 92 (YE), C146, T181, N233, R238, and 249 to 251 (GIK) contribute to the Mo-molybdopterin site.

The protein belongs to the MsrP family. As to quaternary structure, heterodimer of a catalytic subunit (MsrP) and a heme-binding subunit (MsrQ). Requires Mo-molybdopterin as cofactor. Predicted to be exported by the Tat system. The position of the signal peptide cleavage has not been experimentally proven.

Its subcellular location is the periplasm. The enzyme catalyses L-methionyl-[protein] + a quinone + H2O = L-methionyl-(S)-S-oxide-[protein] + a quinol. It carries out the reaction L-methionyl-[protein] + a quinone + H2O = L-methionyl-(R)-S-oxide-[protein] + a quinol. Part of the MsrPQ system that repairs oxidized periplasmic proteins containing methionine sulfoxide residues (Met-O), using respiratory chain electrons. Thus protects these proteins from oxidative-stress damage caused by reactive species of oxygen and chlorine generated by the host defense mechanisms. MsrPQ is essential for the maintenance of envelope integrity under bleach stress, rescuing a wide series of structurally unrelated periplasmic proteins from methionine oxidation, including the primary periplasmic chaperone SurA and the lipoprotein Pal. The catalytic subunit MsrP is non-stereospecific, being able to reduce both (R-) and (S-) diastereoisomers of methionine sulfoxide. The sequence is that of Protein-methionine-sulfoxide reductase catalytic subunit MsrP from Shigella sonnei (strain Ss046).